We begin with the raw amino-acid sequence, 82 residues long: Turripeptide IX-04 (82 aa).

An N-terminal signal peptide occupies residues 1–21 (MGFYMLLTVALLLTSLMNVEA). Positions 22 to 39 (TPVDQAERSALEKSGLGN) are excised as a propeptide. Intrachain disulfides connect cysteine 48/cysteine 70, cysteine 55/cysteine 74, and cysteine 60/cysteine 81.

In terms of tissue distribution, expressed by the venom duct.

It is found in the secreted. The chain is Turripeptide IX-04 from Gemmula speciosa (Splendid gem-turris).